A 189-amino-acid polypeptide reads, in one-letter code: Peptidyl-tRNA hydrolase (189 aa).

Residue Tyr15 coordinates tRNA. His20 (proton acceptor) is an active-site residue. Tyr67, Asn69, and Asn115 together coordinate tRNA.

The protein belongs to the PTH family. Monomer.

The protein localises to the cytoplasm. It catalyses the reaction an N-acyl-L-alpha-aminoacyl-tRNA + H2O = an N-acyl-L-amino acid + a tRNA + H(+). Hydrolyzes ribosome-free peptidyl-tRNAs (with 1 or more amino acids incorporated), which drop off the ribosome during protein synthesis, or as a result of ribosome stalling. In terms of biological role, catalyzes the release of premature peptidyl moieties from peptidyl-tRNA molecules trapped in stalled 50S ribosomal subunits, and thus maintains levels of free tRNAs and 50S ribosomes. The polypeptide is Peptidyl-tRNA hydrolase (Symbiobacterium thermophilum (strain DSM 24528 / JCM 14929 / IAM 14863 / T)).